A 565-amino-acid polypeptide reads, in one-letter code: Sulfite reductase [NADPH] hemoprotein beta-component (565 aa).

Positions 429, 435, 474, and 478 each coordinate [4Fe-4S] cluster. Siroheme is bound at residue C478.

The protein belongs to the nitrite and sulfite reductase 4Fe-4S domain family. As to quaternary structure, alpha(8)-beta(8). The alpha component is a flavoprotein, the beta component is a hemoprotein. It depends on siroheme as a cofactor. [4Fe-4S] cluster serves as cofactor.

It carries out the reaction hydrogen sulfide + 3 NADP(+) + 3 H2O = sulfite + 3 NADPH + 4 H(+). It functions in the pathway sulfur metabolism; hydrogen sulfide biosynthesis; hydrogen sulfide from sulfite (NADPH route): step 1/1. Component of the sulfite reductase complex that catalyzes the 6-electron reduction of sulfite to sulfide. This is one of several activities required for the biosynthesis of L-cysteine from sulfate. This Shewanella baltica (strain OS223) protein is Sulfite reductase [NADPH] hemoprotein beta-component.